We begin with the raw amino-acid sequence, 22 residues long: Fuctinin-1 (22 aa).

Positions 1–22 are disordered; the sequence is SASPGLPKGEKEQQEAIEHIDE. Residues 8–22 are compositionally biased toward basic and acidic residues; that stretch reads KGEKEQQEAIEHIDE.

To human SET/PHAPII protein. As to quaternary structure, oligomer.

The protein localises to the cytoplasm. In terms of biological role, has a role in the physiological regulation of fucosylation processes. The polypeptide is Fuctinin-1 (Rattus norvegicus (Rat)).